The sequence spans 650 residues: Peroxisomal biogenesis factor 8 (650 aa).

A Microbody targeting signal motif is present at residues 648–650 (AKL).

It is found in the peroxisome matrix. Its function is as follows. Essential for peroxisome biogenesis. May play a role in triggering the protein import competence of individual peroxisomes. It may interact with PEX10. The protein is Peroxisomal biogenesis factor 8 (PEX8) of Pichia angusta (Yeast).